A 606-amino-acid polypeptide reads, in one-letter code: Mannan endo-1,4-beta-mannosidase A (606 aa).

Positions 1-19 (MKSLNVILTLLSLIISVLS) are cleaved as a signal peptide. The region spanning 22 to 140 (VYYEAEDGKL…WMWVDAFVIN (119 aa)) is the CBM6 domain. The 295-residue stretch at 164-458 (PAAKKLYDFL…FNHKTVMNMD (295 aa)) folds into the GH26 domain. Trp-285 provides a ligand contact to substrate. Residue Glu-318 is the Proton donor of the active site. Residues Trp-323 and Tyr-378 each coordinate substrate. Glu-406 serves as the catalytic Nucleophile. The interval 472–489 (SGSSHNGNSESNSNTGNS) is linker. CBM10 domains follow at residues 491–527 (ECWS…CGIV), 530–566 (SCWS…CGIV), and 569–605 (SCWA…CGIL). A substrate-binding site is contributed by Trp-493.

The protein belongs to the glycosyl hydrolase 26 family.

It catalyses the reaction Random hydrolysis of (1-&gt;4)-beta-D-mannosidic linkages in mannans, galactomannans and glucomannans.. In terms of biological role, hydrolyzes 1,4-beta linked polysaccharide backbones of mannans, one of the major hemicellulose components in hardwoods and softwoods. Shows very high activity against mannohexaose but not against mannopentaose and smaller mannooligosaccharides. The major products released from mannooligosaccharide hydrolysis are mannose and mannobiose. The reiterated 40 AA domain is involved in binding the cellulase-hemicellulase complex. This Piromyces sp protein is Mannan endo-1,4-beta-mannosidase A (MANA).